Here is a 190-residue protein sequence, read N- to C-terminus: MATHHTLWMGLVLLGLLGGLQAAPEAQVSVQPNFQPDKFLGRWFSAGLASNSSWLQEKKAALSMCKSVVAPATDGGLNLTSTFLRKNQCETRTMLLQPGESLGSYSYGSPHWGSTYSVSVVETDYDHYALLYSQGSKGPGEDFRMATLYSRTQTPRAELKEKFSAFCKAQGFTEDSIVFLPQTDKCMTEQ.

The N-terminal stretch at 1–22 is a signal peptide; that stretch reads MATHHTLWMGLVLLGLLGGLQA. A glycan (N-linked (GlcNAc...) asparagine) is linked at asparagine 51. Cysteine 65 (nucleophile) is an active-site residue. Residue asparagine 78 is glycosylated (N-linked (GlcNAc...) asparagine). The cysteines at positions 89 and 186 are disulfide-linked.

Belongs to the calycin superfamily. Lipocalin family. As to quaternary structure, monomer.

The protein resides in the rough endoplasmic reticulum. Its subcellular location is the nucleus membrane. It is found in the golgi apparatus. It localises to the cytoplasm. The protein localises to the perinuclear region. The protein resides in the secreted. It catalyses the reaction prostaglandin H2 = prostaglandin D2. Functionally, catalyzes the conversion of PGH2 to PGD2, a prostaglandin involved in smooth muscle contraction/relaxation and a potent inhibitor of platelet aggregation. Involved in a variety of CNS functions, such as sedation, NREM sleep and PGE2-induced allodynia, and may have an anti-apoptotic role in oligodendrocytes. Binds small non-substrate lipophilic molecules, including biliverdin, bilirubin, retinal, retinoic acid and thyroid hormone, and may act as a scavenger for harmful hydrophobic molecules and as a secretory retinoid and thyroid hormone transporter. Possibly involved in development and maintenance of the blood-brain, blood-retina, blood-aqueous humor and blood-testis barrier. It is likely to play important roles in both maturation and maintenance of the central nervous system and male reproductive system. Involved in PLA2G3-dependent maturation of mast cells. PLA2G3 is secreted by immature mast cells and acts on nearby fibroblasts upstream to PTDGS to synthesize PGD2, which in turn promotes mast cell maturation and degranulation via PTGDR. This Macaca fuscata fuscata (Japanese macaque) protein is Prostaglandin-H2 D-isomerase (PTGDS).